Here is a 101-residue protein sequence, read N- to C-terminus: Putative pterin-4-alpha-carbinolamine dehydratase (101 aa).

It belongs to the pterin-4-alpha-carbinolamine dehydratase family.

It carries out the reaction (4aS,6R)-4a-hydroxy-L-erythro-5,6,7,8-tetrahydrobiopterin = (6R)-L-erythro-6,7-dihydrobiopterin + H2O. The polypeptide is Putative pterin-4-alpha-carbinolamine dehydratase (Ralstonia pickettii (strain 12J)).